The chain runs to 427 residues: Septin-8-B (427 aa).

The 267-residue stretch at Q39 to E305 folds into the Septin-type G domain. A G1 motif region spans residues G49 to S56. Residues G49–S56, G104, K185–E193, G239, and R254 each bind GTP. A G3 motif region spans residues D101–G104. Residues A184–D187 are G4 motif. A coiled-coil region spans residues L320–Q407. Residues L406–P418 are compositionally biased toward polar residues. Positions L406–N427 are disordered.

This sequence belongs to the TRAFAC class TrmE-Era-EngA-EngB-Septin-like GTPase superfamily. Septin GTPase family.

This chain is Septin-8-B (sept8-b), found in Xenopus laevis (African clawed frog).